The primary structure comprises 67 residues: Large ribosomal subunit protein uL29c (67 aa).

It belongs to the universal ribosomal protein uL29 family.

It localises to the plastid. The protein localises to the chloroplast. The protein is Large ribosomal subunit protein uL29c (rpl29) of Porphyra purpurea (Red seaweed).